A 581-amino-acid chain; its full sequence is Frizzled-10 (581 aa).

The signal sequence occupies residues 1–20 (MQRPGPRLWLVLQVMGSCAA). At 21–225 (ISSMDMERPG…DVYWSREDKR (205 aa)) the chain is on the extracellular side. The 122-residue stretch at 29–150 (PGDGKCQPIE…NDPNYLCMEA (122 aa)) folds into the FZ domain. 5 cysteine pairs are disulfide-bonded: C34–C95, C42–C88, C79–C117, C106–C147, and C110–C134. N-linked (GlcNAc...) asparagine glycosylation is present at N48. An N-linked (GlcNAc...) asparagine glycan is attached at N153. A helical transmembrane segment spans residues 226–246 (FAVVWLAIWAVLCFFSSAFTV). Residues 247-262 (LTFLIDPARFRYPERP) are Cytoplasmic-facing. Residues 263–283 (IIFLSMCYCVYSVGYLIRLFA) traverse the membrane as a helical segment. Over 284–311 (GAESIACDRDSGQLYVIQEGLESTGCTL) the chain is Extracellular. The chain crosses the membrane as a helical span at residues 312–332 (VFLVLYYFGMASSLWWVVLTL). Topologically, residues 333 to 351 (TWFLAAGKKWGHEAIEANS) are cytoplasmic. A helical membrane pass occupies residues 352-372 (SYFHLAAWAIPAVKTILILVM). Residues 373–393 (RRVAGDELTGVCYVGSMDVNA) are Extracellular-facing. Residues 394 to 414 (LTGFVLIPLACYLVIGTSFIL) traverse the membrane as a helical segment. The Cytoplasmic segment spans residues 415-443 (SGFVALFHIRRVMKTGGENTDKLEKLMVR). Residues 444–464 (IGLFSVLYTVPATCVIACYFY) form a helical membrane-spanning segment. Over 465-502 (ERLNMDYWKILAAQHKCKMNNQTKTLDCLMAASIPAVE) the chain is Extracellular. An N-linked (GlcNAc...) asparagine glycan is attached at N485. The helical transmembrane segment at 503–523 (IFMVKIFMLLVVGITSGMWIW) threads the bilayer. Residues 524–581 (TSKTLQSWQQVCSRRLKKKSRRKPASVITSGGIYKKAQHPQKTHHGKYEIPAQSPTCV) lie on the Cytoplasmic side of the membrane. A Lys-Thr-X-X-X-Trp motif, mediates interaction with the PDZ domain of Dvl family members motif is present at residues 526–531 (KTLQSW). The tract at residues 560-581 (AQHPQKTHHGKYEIPAQSPTCV) is disordered. Positions 579–581 (TCV) match the PDZ-binding motif.

It belongs to the G-protein coupled receptor Fz/Smo family. Interacts with WNT7B. Interacts with MYOC. In terms of processing, ubiquitinated by ZNRF3, leading to its degradation by the proteasome. Highest levels in the placenta and fetal kidney, followed by fetal lung and brain. In adult brain, abundantly expressed in the cerebellum, followed by cerebral cortex, medulla and spinal cord; very low levels in total brain, frontal lobe, temporal lobe and putamen. Weak expression detected in adult brain, heart, lung, skeletal muscle, pancreas, spleen and prostate.

Its subcellular location is the cell membrane. In terms of biological role, receptor for Wnt proteins. Functions in the canonical Wnt/beta-catenin signaling pathway. The canonical Wnt/beta-catenin signaling pathway leads to the activation of disheveled proteins, inhibition of GSK-3 kinase, nuclear accumulation of beta-catenin and activation of Wnt target genes. A second signaling pathway involving PKC and calcium fluxes has been seen for some family members, but it is not yet clear if it represents a distinct pathway or if it can be integrated in the canonical pathway, as PKC seems to be required for Wnt-mediated inactivation of GSK-3 kinase. Both pathways seem to involve interactions with G-proteins. May be involved in transduction and intercellular transmission of polarity information during tissue morphogenesis and/or in differentiated tissues. The protein is Frizzled-10 (FZD10) of Homo sapiens (Human).